Reading from the N-terminus, the 310-residue chain is Phosphoribosylaminoimidazole-succinocarboxamide synthase (310 aa).

This sequence belongs to the SAICAR synthetase family.

The catalysed reaction is 5-amino-1-(5-phospho-D-ribosyl)imidazole-4-carboxylate + L-aspartate + ATP = (2S)-2-[5-amino-1-(5-phospho-beta-D-ribosyl)imidazole-4-carboxamido]succinate + ADP + phosphate + 2 H(+). The protein operates within purine metabolism; IMP biosynthesis via de novo pathway; 5-amino-1-(5-phospho-D-ribosyl)imidazole-4-carboxamide from 5-amino-1-(5-phospho-D-ribosyl)imidazole-4-carboxylate: step 1/2. The polypeptide is Phosphoribosylaminoimidazole-succinocarboxamide synthase (Dechloromonas aromatica (strain RCB)).